Here is a 3942-residue protein sequence, read N- to C-terminus: MGNEASLEGGAGEGPLPPGGSGLGPGPGAGKPPSALAGGGQLPVAGAARAAGPPTPGLGPVPGPGPGPGPGSVPRRLDPKEPLGSQRTTSPTPKQASATAPGRESPRETRAQGPSGQEAESPRRTLQVDSRTQRSGRSPSVSPDRGSTPTSPYSVPQIAPLPSSTLCPICKTSDLTSTPSQPNFNTCTQCHNKVCNQCGFNPNPHLTQVKEWLCLNCQMQRALGMDMTTAPRSKSQQQLHSPALSPAHSPAKQPLGKPEQERSPRGPGATQSGPRQAEAARATSVPGPTQATAPPEVGRVSPQPPLSTKPSTAEPRPPAGEAQGKSATTVPSGLGAGEQTQEGLTGKLFGLGASLLTQASTLMSVQPEADTQGQPSPSKGQPKIVFSDASKEAGPRPPGSGPGPGPTPGAKTEPGARMGPGSGPGALAKTGGTASPKHGRAEHQAASKAAAKPKTMPKERASACPLCQAELNMGSRGPANYNTCTACKLQVCNLCGFNPTPHLVEKTEWLCLNCQTKRLLEGSLGEPAPLPLPTPQQPPAGVPHRAAGAAPLKQKGPQGLGQPSGSLPAKASPQATKASPQATKASPQATKASPQTTKASPQAKPLRATEPSKTSSSAQEKKTVTSAKAEPVPKPPPETTVPPGTPKAKSGVKRTDPATPVVKPVPEAPKGGEAEEPVPKPYSQDLSRSPQSLSDTGYSSDGVSSSQSEITGVVQQEVEQLDSAGVTGPRPPSPSELHKVGSSLRPSLEAQAVAPSAEWSKPPRSSSSAVEDQKRRPHSLSITPEAFDSDEELGDILEEDDSLAWGRQREQQDTAESSDDFGSQLRHDYVEDSSEGGLSPLPPQPPARADMTDEEFMRRQILEMSAEEDNLEEDDTAVSGRGLAKHSAQKASARPRPESSQEPKRRLPHNATTGYEELLSEAGPAEPTDSSGALQGGLRRFKTIELNSTGSYGHELDLGQGPDPNLDREPELEMESLTGSPEDRSRGEHSSTLPASTPSYTSGTSPTSLSSLEEDSDSSPSRRQRLEEAKQQRKARHRSHGPLLPTIEDSSEEEELREEEELLREQEKMREVEQQRIRSTARKTRRDKEELRAQRRRERSKTPPSNLSPIEDASPTEELRQAAEMEELHRSSCSEYSPSPSLDSEAETLDGGPTRLYKSGSEYNLPAFMSLYSPTETPSGSSTTPSSGRPLKSAEEAYEDMMRKAEMLQRQQGQVAGARGPHGGPSQPTGPRSQGSFEYQDTQDHDYGGRASQPVAESTPAGLGAAVYEEILQTSQSIARMRQASSRDLGFTEDKKKEKQFLNAESAYMDPMKQNGGPLTPGTSPTQLAAPVSFSTSTSSDSSGGRVIPDVRVTQHFAKEPQDPLKLHSSPVSSTLTSKEVGMTFSQGPGSPATTASPTRGYMTPTSPAGSERSPSTSSTIHSYGQPPTTANYGSQTEELPHAPSGPPGSGRAPREKPLSGGDSEVGAPQPSRGYSYFTGSSPPLSPSTPSESPTFSPGKLGPRATAEFSTQTPSLTLSSDIPRSPGPPSPMVAQGTQTPHRPSTPRLVWQQSSQEAPIMVITLASDASSQTRMVHASASTSPLCSPTDSQPTSHSYSQTTPPSASQMPSEPAGPPGFPRAPSAGTDGPLALYGWGALPAENISLCRISSVPGTSRVEPGPRPPGTAVVDLRTAVKPTPIILTDQGMDLTSLAVEARKYGLALDPVSGRQSTAVQPLVINLNAQEQTHTFLATATTVSITMASSVLMAQQKQPVVYGDPFQSRLDFGQGSGSPVCLAQVKQVEQAVQTAPYRGGPRGRPREAKFARYNLPNQVTPLARRDILITQMGTAQGVGLKPGPVPEPGAEPHRATPAELRSHAPPGTRKPHTVVVQMGEGTAGTVTTLLPEEPAGALDLTGMRPESQLACCDMVYKFPFGSSCTGTFHPAPSAPDKSVTDTALPGQSSGPFYSPRDPEPPEPLTFRTQGVVGPGPHEEQRPYPQGLPGRLYSSMSDTNLAEAGLNYHAQRLGQLFQGPGRDSAVDLSSLKHSYSLGFADGRYLGQGLQYGSFTDLRHPTDLLSHPLPLRRYSSVSNIYSDHRYGPRGDAVGFQEASLAQYSATTAREISRMCAALNSMDQYGGRHGSGSGGPDLVQYQPQHGPGLSAPQGLAPLRSGLLGNPTYPEGQPSPGNLAQYGPAASQATAVRQLLPSTATVRAADGMIYSTINTPIAATLPITTQPASVLRPMVRGGMYRPYVSGGVTAVPLTSLTRVPMIAPRVPLGPAGLYRYPAPRFPIASSVPPAEGPVYLGKPAAAKASGAGGPPRPELPAGVAREEPFSTTAPAVIKEAPVAPAPGPAPAPPPGQKPAGEAVAGSGSGVLSRPASEKEEASQEDRQRKQQEQLLQLERERVELEKLRQLRLQEELERERVELQRHREEEQLLVQRELQELQTIKQHVLQQQQEERQAQFALQREQLAQQRLQLEQIQQLQQQLQLQLEEQKQRQKAPFPATCEAPSRGPPPAATELAQNGQYWPPLTHAAFIAVAGTEGPGQPREPVLHRGLPSSASDMSLQTEEQWEAGRSGIKKRHSMPRLRDACEPESGPDPSTVRRIADSSVQTDDEEGEGRYLVTRRRRTRRSADCSVQTDDEDNADWEQPVRRRRSRLSRHSDSGSDSKHDATASSSTTAAATARAMSSVGIQTISDCSVQTEPEQLPRVSPAIHITAATDPKVEIVRYISAPEKTGRGESLACQTEPDGQAQGVAGPQLIGPTAISPYLPGIQIVTPGALGRFEKKKPDPLEIGYQAHLPPESLSQLVSRQPPKSPQVLYSPVSPLSPHRLLDTSFASSERLNKAHVSPQKQFIADSTLRQQTLPRPMKTLQRSLSDPKPLSPTAEESAKERFSLYQHQGGLGSQVSALPPNGLVRKVKRTLPSPPPEEAHLPLAGQVPSQLYAASLLQRGLAGPTTVPATKASLLRELDRDLRLVEHESTKLRKKQAELDEEEKEIDAKLKYLELGITQRKESLAKDRGGRDYPPLRGLGEHRDYLSDSELNQLRLQGCTTPAGQYVDYPASAAVPATPSGPTAFQQPRFPPAAPQYTAGSSGPTQNGFPAHQAPTYTGPSTYPAPTYPPGTGYPAEPGLPSQPAFHPTGHYAAPTPMPTTQSAPFPVQADSRAAHQKPRQTSLADLEQKVPTNYEVIGSPAVTMSSAPPETGYSGPAVSGSYEQGKAPEHPRGSDRSSVSQSPAPTYPSDSHYTSLEQNVPRNYVMIDDISELTKDSTPTASESQRLEPLGPGGVSGRPGKDPGEPAVLEGPTLPCCYGRGEEESEEDSYDPRGKSGHHRSMESNGRPSTHYYGDSDYRHGARADKYGPGPMGPKHPSKSLAPAAISSKRSKHRKQGMEQKISKFSPIEEAKDVESDLASYPPPTVSSSLTSRGRKFQDEITYGLKKNVYEQQRYYGVSSRDAAEEDERMYGSSSRSRMASAYSGEKLSSHDYSSRGKGYERERDTAERLQKAGSKPSSLSMAHGRARPPMRSQASEEESPVSPLGRPRPAGGALPPGDTCPQFCSSHSMPDVQEHVKDGPRAHAYKREEGYMLDDSHCVVSDSEAYHLGQEETDWFDKPRDARSDRFRHHGGHTVSSSQKRGPARHSYHDYDEPPEEGLWPHDEGGPGRHTSAKEHRHHSDHGRHSGRHAGEEPGRRAAKPHARDMGRHEARPHPQASPAPAMQKKGQPGYPSSADYSQSSRAPSAYHHASESKKGSRQAHTGPSALQPKADTQAQPQMQGRQAAPGPQQSQPPSSRQTPSGTASRQPQTQQQQQQQQQQQGLGQQAPQQAPSQARLQPQSQPTTRGTAPAASQPAGKPQPGPTTAPGPQPAGPPRAEQASSSKPPAAKAPQQGRAPQAQTTPGPGPAGAKPGARPGGTPGAPASQPGAEGESVFSKILPGGAAEQAGKLTEAVSAFGKKFSSFW.

Positions methionine 1–isoleucine 158 are disordered. The N-myristoyl glycine moiety is linked to residue glycine 2. Gly residues predominate over residues glycine 9–alanine 29. Residues lysine 31 to glycine 52 show a composition bias toward low complexity. Over residues proline 53–glycine 71 the composition is skewed to pro residues. The segment at proline 62–glycine 71 is 5 X 2 AA tandem repeats of P-G. 2 stretches are compositionally biased toward polar residues: residues serine 85 to alanine 98 and glutamine 127 to serine 154. Phosphoserine is present on serine 142. An Omega-N-methylarginine modification is found at arginine 145. C4-type zinc fingers lie at residues cysteine 167–cysteine 190 and cysteine 195–cysteine 217. Disordered stretches follow at residues threonine 228–glutamine 341 and leucine 362–proline 457. The segment covering alanine 230–histidine 240 has biased composition (polar residues). A phosphoserine mark is found at serine 241 and serine 245. Residues leucine 362–lysine 379 are compositionally biased toward polar residues. Over residues proline 395–threonine 407 the composition is skewed to pro residues. C4-type zinc fingers lie at residues cysteine 464–cysteine 487 and cysteine 492–cysteine 514. 4 disordered regions span residues glycine 525 to glycine 937, glycine 950 to serine 1258, methionine 1309 to serine 1553, and arginine 1573 to glycine 1625. Positions alanine 528–glycine 541 are enriched in pro residues. A run of 5 repeats spans residues lysine 570–threonine 576, lysine 577–threonine 583, lysine 584–threonine 590, lysine 591–threonine 597, and lysine 598–lysine 604. The interval lysine 570–lysine 604 is 5 X 7 AA tandem repeats of K-A-S-P-Q-[AT]-[AT]. Over residues proline 573 to serine 600 the composition is skewed to polar residues. Positions valine 632–threonine 645 are enriched in pro residues. A compositionally biased stretch (polar residues) spans glutamine 684 to leucine 693. The span at serine 694–serine 708 shows a compositional bias: low complexity. Residues glutamate 709–valine 718 are compositionally biased toward polar residues. Acidic residues-rich tracts occupy residues phenylalanine 787–serine 802 and serine 865–threonine 876. Omega-N-methylarginine is present on arginine 881. Basic and acidic residues predominate over residues proline 895–arginine 905. At serine 980 the chain carries Phosphoserine. A compositionally biased stretch (low complexity) spans proline 994–serine 1011. The span at aspartate 1049–leucine 1062 shows a compositional bias: acidic residues. A phosphoserine mark is found at serine 1050 and serine 1051. A compositionally biased stretch (basic and acidic residues) spans leucine 1063 to arginine 1076. Serine 1100 carries the phosphoserine modification. At threonine 1102 the chain carries Phosphothreonine. Serine 1108 and serine 1114 each carry phosphoserine. A compositionally biased stretch (basic and acidic residues) spans glutamate 1117–serine 1132. 2 stretches are compositionally biased toward low complexity: residues cysteine 1133–aspartate 1143 and serine 1173–proline 1190. Residues lysine 1192–methionine 1207 are compositionally biased toward basic and acidic residues. Low complexity predominate over residues glutamine 1209–arginine 1219. The segment covering serine 1226–glutamine 1240 has biased composition (polar residues). Phosphoserine is present on serine 1236. Positions serine 1333–serine 1343 are enriched in low complexity. O-linked (GlcNAc) threonine glycosylation is present at threonine 1354. The span at phenylalanine 1357–lysine 1366 shows a compositional bias: basic and acidic residues. The segment covering serine 1370–glutamate 1438 has biased composition (polar residues). The O-linked (GlcNAc) threonine glycan is linked to threonine 1395. Residues serine 1482, serine 1491, and serine 1493 each carry the phosphoserine modification. Positions serine 1488 to proline 1498 are enriched in low complexity. Composition is skewed to polar residues over residues glutamate 1508–isoleucine 1522 and arginine 1573–proline 1609. Residue serine 1707 is glycosylated (O-linked (GlcNAc) serine). Omega-N-methylarginine is present on residues arginine 1792 and arginine 1796. Arginine 1806 is modified (asymmetric dimethylarginine; alternate). Arginine 1806 carries the post-translational modification Omega-N-methylarginine; alternate. Arginine 1818 is subject to Omega-N-methylarginine. Disordered stretches follow at residues glycine 1831 to proline 1865 and proline 1926 to tyrosine 1977. The segment covering alanine 1844–serine 1856 has biased composition (basic and acidic residues). A glycan (O-linked (GlcNAc) threonine) is linked at threonine 1934. Serine 1990 and serine 2046 each carry phosphoserine. Omega-N-methylarginine occurs at positions 2051 and 2081. Arginine 2255, arginine 2265, and arginine 2270 each carry asymmetric dimethylarginine. A glycan (O-linked (GlcNAc) threonine) is linked at threonine 2318. 3 disordered regions span residues proline 2327–glutamate 2378, glutamate 2476–alanine 2504, and threonine 2524–alanine 2663. Pro residues predominate over residues alanine 2329–glutamine 2342. Basic and acidic residues predominate over residues alanine 2361–glutamate 2378. 2 coiled-coil regions span residues glutamate 2366–arginine 2422 and leucine 2453–alanine 2483. The O-linked (GlcNAc) threonine glycan is linked to threonine 2524. Polar residues predominate over residues serine 2541 to glutamate 2551. A Phosphoserine modification is found at serine 2578. Phosphothreonine is present on residues threonine 2595 and threonine 2622. Residues arginine 2643–alanine 2655 are compositionally biased toward basic and acidic residues. Threonine 2700 carries an O-linked (GlcNAc) threonine glycan. The interaction with DAO stretch occupies residues glutamate 2730–aspartate 3278. Phosphoserine is present on residues serine 2811, serine 2860, and serine 2866. Positions threonine 2854–lysine 2874 are disordered. A glycan (O-linked (GlcNAc) threonine) is linked at threonine 2945. Phosphoserine is present on serine 3022. Disordered stretches follow at residues proline 3051–arginine 3409, tyrosine 3431–histidine 3560, and glutamate 3581–proline 3917. Polar residues predominate over residues threonine 3073 to glycine 3083. A compositionally biased stretch (low complexity) spans alanine 3089–glycine 3114. The span at lysine 3202–aspartate 3211 shows a compositional bias: basic and acidic residues. Over residues arginine 3212–proline 3237 the composition is skewed to polar residues. Serine 3301 carries the post-translational modification Phosphoserine. 2 stretches are compositionally biased toward basic and acidic residues: residues glycine 3330–lysine 3342 and glutamine 3372–glutamate 3391. Serine 3382 bears the Phosphoserine mark. Residues tyrosine 3447–glycine 3461 show a composition bias toward low complexity. Residues leucine 3464–glutamine 3487 show a composition bias toward basic and acidic residues. Arginine 3502 is subject to Omega-N-methylarginine. Residues proline 3520–glycine 3534 are compositionally biased toward low complexity. Basic and acidic residues-rich tracts occupy residues valine 3549–histidine 3560 and tryptophan 3592–aspartate 3602. Residues glutamate 3652–arginine 3665 are compositionally biased toward basic residues. Over residues histidine 3666–proline 3690 the composition is skewed to basic and acidic residues. A compositionally biased stretch (low complexity) spans threonine 3750–proline 3820. Arginine 3823 is subject to Omega-N-methylarginine. The segment covering lysine 3835–proline 3851 has biased composition (pro residues). Residues glutamine 3856–alanine 3891 show a composition bias toward low complexity.

In terms of assembly, interacts with PCLO, ERC2/CAST1, RIMS1 and UNC13A. Interacts with TPRG1L. Interacts with DYNLL1 and DYNLL2; these interactions potentially link PTVs to dynein and myosin V motor complexes. Interacts with ATG5; this interaction is important for the regulation of presynaptic autophagy. Interacts (via C-terminus) with TRIO (via N-terminus). Interacts with CTBP1. Interacts with SIAH1; this interaction negatively regulates SIAH1 E3 ligase activity. Interacts (via coiled region) with DAO; the interaction is direct. Post-translationally, myristoylated. The N-terminal myristoylation is not sufficient for presynaptic localization. As to expression, expressed in brain and retina.

Its subcellular location is the cytoplasm. The protein resides in the presynaptic active zone. It localises to the cytoskeleton. The protein localises to the cytoplasmic vesicle. It is found in the secretory vesicle. Its subcellular location is the synaptic vesicle membrane. Its function is as follows. Scaffold protein of the presynaptic cytomatrix at the active zone (CAZ) which is the place in the synapse where neurotransmitter is released. After synthesis, participates in the formation of Golgi-derived membranous organelles termed Piccolo-Bassoon transport vesicles (PTVs) that are transported along axons to sites of nascent synaptic contacts. At the presynaptic active zone, regulates the spatial organization of synaptic vesicle cluster, the protein complexes that execute membrane fusion and compensatory endocytosis. Also functions in processes other than assembly such as the regulation of specific presynaptic protein ubiquitination by interacting with SIAH1 or the regulation of presynaptic autophagy by associating with ATG5. Also mediates synapse to nucleus communication leading to reconfiguration of gene expression by associating with the transcriptional corepressor CTBP1 and by subsequently reducing the size of its pool available for nuclear import. Inhibits the activity of the proportion of DAO enzyme that localizes to the presynaptic active zone, which may modulate synaptic transmission. The polypeptide is Protein bassoon (Mus musculus (Mouse)).